A 51-amino-acid chain; its full sequence is MRDKIKLESSAGTGHFYTTTKNKRTMPEKMEIKKFDPVARKHVLYKETKLK.

Residues 1 to 23 are disordered; the sequence is MRDKIKLESSAGTGHFYTTTKNK. Residues 10-20 show a composition bias toward polar residues; that stretch reads SAGTGHFYTTT.

Belongs to the bacterial ribosomal protein bL33 family.

The polypeptide is Large ribosomal subunit protein bL33 (Chromobacterium violaceum (strain ATCC 12472 / DSM 30191 / JCM 1249 / CCUG 213 / NBRC 12614 / NCIMB 9131 / NCTC 9757 / MK)).